The sequence spans 594 residues: UvrABC system protein C (594 aa).

Residues 13 to 99 (HSSGVYQYFD…IKQLKPKYNI (87 aa)) enclose the GIY-YIG domain. One can recognise a UVR domain in the interval 205–240 (DKLIKELELKMERLSNNLRFEEALIYRDRIAKIQKI).

It belongs to the UvrC family. In terms of assembly, interacts with UvrB in an incision complex.

It localises to the cytoplasm. Its function is as follows. The UvrABC repair system catalyzes the recognition and processing of DNA lesions. UvrC both incises the 5' and 3' sides of the lesion. The N-terminal half is responsible for the 3' incision and the C-terminal half is responsible for the 5' incision. The chain is UvrABC system protein C from Helicobacter pylori (strain Shi470).